We begin with the raw amino-acid sequence, 166 residues long: Small ribosomal subunit protein uS5 (166 aa).

In terms of domain architecture, S5 DRBM spans 11–74; the sequence is LIEKLITVNR…EKARRNMVTV (64 aa).

Belongs to the universal ribosomal protein uS5 family. Part of the 30S ribosomal subunit. Contacts proteins S4 and S8.

With S4 and S12 plays an important role in translational accuracy. Functionally, located at the back of the 30S subunit body where it stabilizes the conformation of the head with respect to the body. This is Small ribosomal subunit protein uS5 from Idiomarina loihiensis (strain ATCC BAA-735 / DSM 15497 / L2-TR).